We begin with the raw amino-acid sequence, 313 residues long: Protoheme IX farnesyltransferase (313 aa).

Helical transmembrane passes span 35-55 (LVIF…HPVL), 56-76 (AFTS…LNMW), 98-118 (VSKP…VVTL), 120-140 (ILVN…YVVI), 153-173 (IVIG…AAAG), 180-200 (MLLF…LALF), 226-246 (ILLY…LGYF), 248-268 (AIYG…TLRV), and 285-305 (FKFS…EVIV).

Belongs to the UbiA prenyltransferase family. Protoheme IX farnesyltransferase subfamily.

It localises to the cell inner membrane. The enzyme catalyses heme b + (2E,6E)-farnesyl diphosphate + H2O = Fe(II)-heme o + diphosphate. It functions in the pathway porphyrin-containing compound metabolism; heme O biosynthesis; heme O from protoheme: step 1/1. In terms of biological role, converts heme B (protoheme IX) to heme O by substitution of the vinyl group on carbon 2 of heme B porphyrin ring with a hydroxyethyl farnesyl side group. The sequence is that of Protoheme IX farnesyltransferase from Rhodopseudomonas palustris (strain BisB18).